Consider the following 166-residue polypeptide: Eukaryotic translation initiation factor 5A (166 aa).

Positions 1–21 (MSDEDHDFSHQGGGDNASKTY) are disordered. Lys-53 is subject to Hypusine. Positions 101–121 (EDPSLPSHLSLMDDEGESRED) are disordered. Over residues 112–121 (MDDEGESRED) the composition is skewed to acidic residues.

The protein belongs to the eIF-5A family. In terms of processing, lys-53 undergoes hypusination, a unique post-translational modification that consists in the addition of a butylamino group from spermidine to lysine side chain, leading to the formation of the unusual amino acid hypusine. eIF-5As are the only known proteins to undergo this modification, which is essential for their function.

It localises to the cytoplasm. In terms of biological role, translation factor that promotes translation elongation and termination, particularly upon ribosome stalling at specific amino acid sequence contexts. Binds between the exit (E) and peptidyl (P) site of the ribosome and promotes rescue of stalled ribosome: specifically required for efficient translation of polyproline-containing peptides as well as other motifs that stall the ribosome. Acts as a ribosome quality control (RQC) cofactor by joining the RQC complex to facilitate peptidyl transfer during CAT tailing step. The chain is Eukaryotic translation initiation factor 5A from Leishmania donovani.